A 350-amino-acid chain; its full sequence is 2-oxoglutarate-dependent ethylene/succinate-forming enzyme (350 aa).

One can recognise a Fe2OG dioxygenase domain in the interval glycine 166–proline 286. Fe cation is bound by residues histidine 189 and histidine 268.

It belongs to the iron/ascorbate-dependent oxidoreductase family. Monomer. Fe(2+) is required as a cofactor.

It carries out the reaction 2-oxoglutarate + O2 + 2 H(+) = ethene + 3 CO2 + H2O. The enzyme catalyses L-arginine + 2-oxoglutarate + O2 = guanidine + L-glutamate 5-semialdehyde + succinate + CO2. It participates in alkene biosynthesis; ethylene biosynthesis via 2-oxoglutarate. In terms of biological role, simultaneously catalyzes two reactions, namely formation of ethylene and of succinate from 2-oxoglutarate. The protein is 2-oxoglutarate-dependent ethylene/succinate-forming enzyme (efe) of Pseudomonas amygdali pv. sesami (Pseudomonas syringae pv. sesami).